A 417-amino-acid polypeptide reads, in one-letter code: Lipoyl synthase, mitochondrial (417 aa).

Residues 1-26 (MAVCARGLRCLGTPAVSLRLAASRSY) constitute a mitochondrion transit peptide. Residues 27 to 61 (ATTTPPDPAIPNTPGAAATSSPAKRPRTSFQDKLN) form a disordered region. Positions 44-58 (ATSSPAKRPRTSFQD) are enriched in polar residues. Cys134, Cys139, Cys145, Cys165, Cys169, Cys172, and Ser380 together coordinate [4Fe-4S] cluster. The region spanning 148–369 (GGSKSAATAT…KEKALEMGFL (222 aa)) is the Radical SAM core domain. A disordered region spans residues 398–417 (ESTGPGSASVQDVATGDLVR).

Belongs to the radical SAM superfamily. Lipoyl synthase family. The cofactor is [4Fe-4S] cluster.

The protein resides in the mitochondrion. The enzyme catalyses [[Fe-S] cluster scaffold protein carrying a second [4Fe-4S](2+) cluster] + N(6)-octanoyl-L-lysyl-[protein] + 2 oxidized [2Fe-2S]-[ferredoxin] + 2 S-adenosyl-L-methionine + 4 H(+) = [[Fe-S] cluster scaffold protein] + N(6)-[(R)-dihydrolipoyl]-L-lysyl-[protein] + 4 Fe(3+) + 2 hydrogen sulfide + 2 5'-deoxyadenosine + 2 L-methionine + 2 reduced [2Fe-2S]-[ferredoxin]. Its pathway is protein modification; protein lipoylation via endogenous pathway; protein N(6)-(lipoyl)lysine from octanoyl-[acyl-carrier-protein]: step 2/2. In terms of biological role, catalyzes the radical-mediated insertion of two sulfur atoms into the C-6 and C-8 positions of the octanoyl moiety bound to the lipoyl domains of lipoate-dependent enzymes, thereby converting the octanoylated domains into lipoylated derivatives. This is Lipoyl synthase, mitochondrial from Uncinocarpus reesii (strain UAMH 1704).